The sequence spans 169 residues: MSQDFVEIAKIGATYKLDGELNLYPLASSIETLLSYGDWYIQLPANSAWQPLKDESVLRRADKLYIKLASVNDVETAKKYVNSLIGVPKEALPKVGNDEAYFTDLIGCTIVNTANDSFGKVIGIIETGANEVLVCKKDSDEYLIPYVKQYIVSEDLDLKKIVVDWEYDY.

In terms of domain architecture, PRC barrel spans 97-169 (NDEAYFTDLI…KIVVDWEYDY (73 aa)).

Belongs to the RimM family. As to quaternary structure, binds ribosomal protein uS19.

It is found in the cytoplasm. In terms of biological role, an accessory protein needed during the final step in the assembly of 30S ribosomal subunit, possibly for assembly of the head region. Essential for efficient processing of 16S rRNA. May be needed both before and after RbfA during the maturation of 16S rRNA. It has affinity for free ribosomal 30S subunits but not for 70S ribosomes. The chain is Ribosome maturation factor RimM from Francisella philomiragia subsp. philomiragia (strain ATCC 25017 / CCUG 19701 / FSC 153 / O#319-036).